Reading from the N-terminus, the 330-residue chain is 2-oxoisovalerate dehydrogenase subunit alpha (330 aa).

Substrate-binding positions include Phe44, Tyr73, 107–110 (MPGH), and Ser123. 72–74 (YYR) contacts thiamine diphosphate. Thiamine diphosphate-binding positions include 123 to 125 (SPV), 153 to 159 (GEGSSNQ), 183 to 187 (NKYAI), and His252. Residues Glu154, Asn183, and Tyr185 each contribute to the Mg(2+) site. The disordered stretch occupies residues 249–272 (LTPHSSDDDDSSYRGREEVEEAKK). Residues 259 to 272 (SSYRGREEVEEAKK) show a composition bias toward basic and acidic residues.

This sequence belongs to the BCKDHA family. As to quaternary structure, heterotetramer of two alpha and two beta chains. Directly associated with ODBB in the E1 complex. Requires thiamine diphosphate as cofactor.

The catalysed reaction is N(6)-[(R)-lipoyl]-L-lysyl-[protein] + 3-methyl-2-oxobutanoate + H(+) = N(6)-[(R)-S(8)-2-methylpropanoyldihydrolipoyl]-L-lysyl-[protein] + CO2. Its function is as follows. The branched-chain alpha-keto dehydrogenase complex catalyzes the overall conversion of alpha-keto acids to acyl-CoA and CO(2). It contains multiple copies of three enzymatic components: branched-chain alpha-keto acid decarboxylase (E1), lipoamide acyltransferase (E2) and lipoamide dehydrogenase (E3). This Bacillus subtilis (strain 168) protein is 2-oxoisovalerate dehydrogenase subunit alpha (bfmBAA).